Here is a 777-residue protein sequence, read N- to C-terminus: Myotubularin-related protein 10 (777 aa).

The interval 196 to 217 (PSGDGGGGGGGGNGAGGGSSQK) is disordered. Residues 197–214 (SGDGGGGGGGGNGAGGGS) are compositionally biased toward gly residues. The region spanning 221 to 661 (FETYSDWDRE…THIKLWKLCY (441 aa)) is the Myotubularin phosphatase domain. A phosphoserine mark is found at serine 607 and serine 751.

It belongs to the protein-tyrosine phosphatase family. Non-receptor class myotubularin subfamily.

The polypeptide is Myotubularin-related protein 10 (MTMR10) (Homo sapiens (Human)).